A 381-amino-acid chain; its full sequence is Putative 2-heptyl-3-hydroxy-4(1H)-quinolone synthase AqdB1 (381 aa).

This sequence belongs to the 3-hydroxybenzoate 6-hydroxylase family.

It carries out the reaction 2-heptyl-4(1H)-quinolone + NADH + O2 + H(+) = 2-heptyl-3-hydroxy-4(1H)-quinolone + NAD(+) + H2O. Its function is as follows. Could be involved in the degradation of the Pseudomonas aeruginosa quorum sensing signal molecule HHQ (2-heptyl-4-quinolone) to anthranilic acid. May catalyze the hydroxylation of HHQ to PQS (2-heptyl-3-hydroxy-4-quinolone). This chain is Putative 2-heptyl-3-hydroxy-4(1H)-quinolone synthase AqdB1, found in Rhodococcus erythropolis (Arthrobacter picolinophilus).